A 116-amino-acid polypeptide reads, in one-letter code: Probable non-functional immunoglobulin kappa variable 3-7 (116 aa).

Residues 1-21 form the signal peptide; sequence MEAPAQLLFLLLLWLPDTTRE. The framework-1 stretch occupies residues 21 to 43; it reads EIVMTQSPPTLSLSPGERVTLSC. In terms of domain architecture, Ig-like spans 22 to 116; the sequence is IVMTQSPPTL…YYCQQDYNLP (95 aa). A disulfide bond links C43 and C109. Positions 44–55 are complementarity-determining-1; the sequence is RASQSVSSSYLT. Residues 56 to 70 are framework-2; the sequence is WYQQKPGQAPRLLIY. The complementarity-determining-2 stretch occupies residues 71 to 77; the sequence is GASTRAT. A framework-3 region spans residues 78 to 109; that stretch reads SIPARFSGSGSGTDFTLTISSLQPEDFAVYYC. The tract at residues 110–116 is complementarity-determining-3; the sequence is QQDYNLP.

Immunoglobulins are composed of two identical heavy chains and two identical light chains; disulfide-linked.

The protein resides in the secreted. The protein localises to the cell membrane. Probable non-functional open reading frame (ORF) of V region of the variable domain of immunoglobulin light chains. Non-functional ORF generally cannot participate in the synthesis of a productive immunoglobulin chain due to altered V-(D)-J or switch recombination and/or splicing site (at mRNA level) and/or conserved amino acid change (protein level). Immunoglobulins, also known as antibodies, are membrane-bound or secreted glycoproteins produced by B lymphocytes. In the recognition phase of humoral immunity, the membrane-bound immunoglobulins serve as receptors which, upon binding of a specific antigen, trigger the clonal expansion and differentiation of B lymphocytes into immunoglobulins-secreting plasma cells. Secreted immunoglobulins mediate the effector phase of humoral immunity, which results in the elimination of bound antigens. The antigen binding site is formed by the variable domain of one heavy chain, together with that of its associated light chain. Thus, each immunoglobulin has two antigen binding sites with remarkable affinity for a particular antigen. The variable domains are assembled by a process called V-(D)-J rearrangement and can then be subjected to somatic hypermutations which, after exposure to antigen and selection, allow affinity maturation for a particular antigen. In Homo sapiens (Human), this protein is Probable non-functional immunoglobulin kappa variable 3-7.